Reading from the N-terminus, the 360-residue chain is Archaemetzincin-2 (360 aa).

H254 provides a ligand contact to Zn(2+). The active-site Proton acceptor is E255. Zn(2+) contacts are provided by H258, H264, C265, C270, C289, and C292.

Belongs to the peptidase M54 family. Requires Zn(2+) as cofactor.

Its function is as follows. Probable zinc metalloprotease. This is Archaemetzincin-2 (AMZ2) from Pongo abelii (Sumatran orangutan).